A 542-amino-acid polypeptide reads, in one-letter code: Glucose-6-phosphate isomerase 2 (542 aa).

Glu-353 functions as the Proton donor in the catalytic mechanism. Residues His-384 and Lys-505 contribute to the active site.

Belongs to the GPI family.

It is found in the cytoplasm. The catalysed reaction is alpha-D-glucose 6-phosphate = beta-D-fructose 6-phosphate. Its pathway is carbohydrate biosynthesis; gluconeogenesis. It functions in the pathway carbohydrate degradation; glycolysis; D-glyceraldehyde 3-phosphate and glycerone phosphate from D-glucose: step 2/4. In terms of biological role, catalyzes the reversible isomerization of glucose-6-phosphate to fructose-6-phosphate. This is Glucose-6-phosphate isomerase 2 from Cupriavidus pinatubonensis (strain JMP 134 / LMG 1197) (Cupriavidus necator (strain JMP 134)).